Here is a 388-residue protein sequence, read N- to C-terminus: 3-dehydroquinate synthase (388 aa).

Belongs to the archaeal-type DHQ synthase family.

It carries out the reaction 2-amino-2,3,7-trideoxy-D-lyxo-hept-6-ulosonate + NAD(+) + H2O = 3-dehydroquinate + NH4(+) + NADH + H(+). Catalyzes the oxidative deamination and cyclization of 2-amino-3,7-dideoxy-D-threo-hept-6-ulosonic acid (ADH) to yield 3-dehydroquinate (DHQ), which is fed into the canonical shikimic pathway of aromatic amino acid biosynthesis. This chain is 3-dehydroquinate synthase, found in Natronomonas pharaonis (strain ATCC 35678 / DSM 2160 / CIP 103997 / JCM 8858 / NBRC 14720 / NCIMB 2260 / Gabara) (Halobacterium pharaonis).